A 163-amino-acid chain; its full sequence is UPF0260 protein GOX1406 (163 aa).

It belongs to the UPF0260 family.

The chain is UPF0260 protein GOX1406 from Gluconobacter oxydans (strain 621H) (Gluconobacter suboxydans).